Here is a 776-residue protein sequence, read N- to C-terminus: Probable inorganic carbon transporter subunit DabA (776 aa).

Zn(2+)-binding residues include Cys313, Asp315, His473, and Cys488.

Belongs to the inorganic carbon transporter (TC 9.A.2) DabA family. Forms a complex with DabB. It depends on Zn(2+) as a cofactor.

It is found in the cell inner membrane. In terms of biological role, part of an energy-coupled inorganic carbon pump. This chain is Probable inorganic carbon transporter subunit DabA, found in Chromobacterium violaceum (strain ATCC 12472 / DSM 30191 / JCM 1249 / CCUG 213 / NBRC 12614 / NCIMB 9131 / NCTC 9757 / MK).